A 161-amino-acid polypeptide reads, in one-letter code: Transcription elongation factor GreA (161 aa).

A coiled-coil region spans residues 8–28 (LTQEGFKQLEKELENLIQVKR).

Belongs to the GreA/GreB family.

In terms of biological role, necessary for efficient RNA polymerase transcription elongation past template-encoded arresting sites. The arresting sites in DNA have the property of trapping a certain fraction of elongating RNA polymerases that pass through, resulting in locked ternary complexes. Cleavage of the nascent transcript by cleavage factors such as GreA or GreB allows the resumption of elongation from the new 3'terminus. GreA releases sequences of 2 to 3 nucleotides. This is Transcription elongation factor GreA from Mycoplasma genitalium (strain ATCC 33530 / DSM 19775 / NCTC 10195 / G37) (Mycoplasmoides genitalium).